Here is a 151-residue protein sequence, read N- to C-terminus: Macrodomain Ter protein (151 aa).

The protein belongs to the MatP family. Homodimer.

The protein localises to the cytoplasm. In terms of biological role, required for spatial organization of the terminus region of the chromosome (Ter macrodomain) during the cell cycle. Prevents early segregation of duplicated Ter macrodomains during cell division. Binds specifically to matS, which is a 13 bp signature motif repeated within the Ter macrodomain. This chain is Macrodomain Ter protein, found in Enterobacter sp. (strain 638).